A 182-amino-acid chain; its full sequence is Probable peptidyl-prolyl cis-trans isomerase A (182 aa).

Positions 13 to 181 (QNATATLHTN…EPVVIDSITI (169 aa)) constitute a PPIase cyclophilin-type domain. Residues 161-182 (TTATDGNDRPTEPVVIDSITIS) are disordered.

The protein belongs to the cyclophilin-type PPIase family.

It is found in the cytoplasm. It catalyses the reaction [protein]-peptidylproline (omega=180) = [protein]-peptidylproline (omega=0). Functionally, PPIases accelerate the folding of proteins. It catalyzes the cis-trans isomerization of proline imidic peptide bonds in oligopeptides. The polypeptide is Probable peptidyl-prolyl cis-trans isomerase A (ppiA) (Mycobacterium leprae (strain TN)).